Consider the following 70-residue polypeptide: Large ribosomal subunit protein uL29 (70 aa).

It belongs to the universal ribosomal protein uL29 family.

In Clostridium novyi (strain NT), this protein is Large ribosomal subunit protein uL29.